Reading from the N-terminus, the 160-residue chain is 3-hydroxyacyl-[acyl-carrier-protein] dehydratase FabZ (160 aa).

H59 is an active-site residue.

This sequence belongs to the thioester dehydratase family. FabZ subfamily.

It is found in the cytoplasm. It catalyses the reaction a (3R)-hydroxyacyl-[ACP] = a (2E)-enoyl-[ACP] + H2O. In terms of biological role, involved in unsaturated fatty acids biosynthesis. Catalyzes the dehydration of short chain beta-hydroxyacyl-ACPs and long chain saturated and unsaturated beta-hydroxyacyl-ACPs. This Burkholderia thailandensis (strain ATCC 700388 / DSM 13276 / CCUG 48851 / CIP 106301 / E264) protein is 3-hydroxyacyl-[acyl-carrier-protein] dehydratase FabZ.